We begin with the raw amino-acid sequence, 462 residues long: Semenogelin-1 (462 aa).

Positions 1–23 (MKPNIIFVLSLLLILEKQAAVMG) are cleaved as a signal peptide. Gln24 is subject to Pyrrolidone carboxylic acid. A disordered region spans residues 24–61 (QKGGSKGRLPSEFSQFPHGQKGQHYSGQKGKQQTESKG). The segment covering 46-61 (QHYSGQKGKQQTESKG) has biased composition (polar residues). 3 consecutive repeat copies span residues 70–129 (HVDA…VVIH), 141–200 (NPSQ…QTEE), and 201–260 (LVAN…QDEL). A repeat-rich region region spans residues 70 to 439 (HVDANDHDQS…SHGGLDIVII (370 aa)). Disordered regions lie at residues 131–157 (KGGK…GISS) and 173–194 (KEQT…QSSY). Over residues 138-157 (GTQNPSQDQGNSPSGKGISS) the composition is skewed to polar residues. An interaction with EPPIN region spans residues 164–283 (ERLWVHGLSK…NQDQQHGRKA (120 aa)). The tract at residues 261–380 (LVYNKNQHQT…QRSIYSQTEK (120 aa)) is 2 X 60 AA tandem repeats, type 1. The tract at residues 270 to 432 (TKNLNQDQQH…KGRHQHGSHG (163 aa)) is disordered. 3 stretches are compositionally biased toward polar residues: residues 308-317 (DVSQSSIYSQ), 324-335 (GKSQKQITIPSQ), and 343-352 (ANKISYQSSS). One copy of the 3-2 repeat lies at 381-439 (LVAGKSQIQAPNPKQEPWHGENAKGESGQSTNREQDLLSHEQKGRHQHGSHGGLDIVII). A compositionally biased stretch (basic and acidic residues) spans 413 to 424 (REQDLLSHEQKG).

This sequence belongs to the semenogelin family. In terms of assembly, occurs in disulfide-linked complexes which may also contain two less abundant 71- and 76-kDa semenogelin-related polypeptides. Interacts with EPPIN (via C-terminus); Cys-239 is a critical amino acid for both binding to EPPIN. Transglutaminase substrate. In terms of processing, rapidly cleaved after ejaculation by KLK3/PSA, resulting in liquefaction of the semen coagulum and the progressive release of motile spermatozoa. As to expression, seminal vesicle.

The protein resides in the secreted. Predominant protein in semen. It participates in the formation of a gel matrix entrapping the accessory gland secretions and ejaculated spermatozoa. Fragments of semenogelin and/or fragments of the related proteins may contribute to the activation of progressive sperm movements as the gel-forming proteins are fragmented by KLK3/PSA. Functionally, alpha-inhibin-92 and alpha-inhibin-31, derived from the proteolytic degradation of semenogelin, inhibit the secretion of pituitary follicle-stimulating hormone. The chain is Semenogelin-1 (SEMG1) from Homo sapiens (Human).